A 63-amino-acid polypeptide reads, in one-letter code: Cecropin-A (63 aa).

The N-terminal stretch at 1 to 22 is a signal peptide; sequence MNFVRILSFVFALVLALGAVSA. The propeptide occupies 23-26; the sequence is APEP. L61 carries the leucine amide modification.

It belongs to the cecropin family. Highest expression in fat body and hemocytes. Is also expressed in Malpighian tubules and to a much lesser extent in midgut. Not present in silk gland.

The protein resides in the secreted. Cecropins have lytic and antibacterial activity against several Gram-positive and Gram-negative bacteria. The polypeptide is Cecropin-A (CECA) (Bombyx mori (Silk moth)).